Reading from the N-terminus, the 316-residue chain is Ribose-phosphate pyrophosphokinase (316 aa).

Residues 41–43 (DGE) and 100–101 (RQ) each bind ATP. Mg(2+)-binding residues include H134 and D174. Residue K197 is part of the active site. Residues R199, D223, and 227-231 (DTAGT) contribute to the D-ribose 5-phosphate site.

The protein belongs to the ribose-phosphate pyrophosphokinase family. Class I subfamily. As to quaternary structure, homohexamer. It depends on Mg(2+) as a cofactor.

Its subcellular location is the cytoplasm. The enzyme catalyses D-ribose 5-phosphate + ATP = 5-phospho-alpha-D-ribose 1-diphosphate + AMP + H(+). Its pathway is metabolic intermediate biosynthesis; 5-phospho-alpha-D-ribose 1-diphosphate biosynthesis; 5-phospho-alpha-D-ribose 1-diphosphate from D-ribose 5-phosphate (route I): step 1/1. Involved in the biosynthesis of the central metabolite phospho-alpha-D-ribosyl-1-pyrophosphate (PRPP) via the transfer of pyrophosphoryl group from ATP to 1-hydroxyl of ribose-5-phosphate (Rib-5-P). In Caldanaerobacter subterraneus subsp. tengcongensis (strain DSM 15242 / JCM 11007 / NBRC 100824 / MB4) (Thermoanaerobacter tengcongensis), this protein is Ribose-phosphate pyrophosphokinase.